Here is a 238-residue protein sequence, read N- to C-terminus: MSKSLIVALDFPGKKEVEQFLQHFEGEELFVKVGMELFYKEGPAIITYLKEKGHKIFLDLKLHDIPNTVKSAMRSLASLDVDMVNVHAAGGSSMMKAALEGLEEGKQEGKERPICIAVTQLTSTSEVMMKKEIGIEKTLEEAVAHYAKLTKESGLDGVVCSTLEVPKLREVCGDEFVTVTPGIRLASDDVNDQVRVATPKRARELGSSYIVVGRSITKAENPLEAYQTVKQQWEGVTV.

Residues Asp-10, Lys-32, 59-68 (DLKLHDIPNT), Thr-122, Arg-184, Gln-193, Gly-213, and Arg-214 contribute to the substrate site. Lys-61 serves as the catalytic Proton donor.

It belongs to the OMP decarboxylase family. Type 1 subfamily. As to quaternary structure, homodimer.

The enzyme catalyses orotidine 5'-phosphate + H(+) = UMP + CO2. The protein operates within pyrimidine metabolism; UMP biosynthesis via de novo pathway; UMP from orotate: step 2/2. Catalyzes the decarboxylation of orotidine 5'-monophosphate (OMP) to uridine 5'-monophosphate (UMP). This Bacillus cytotoxicus (strain DSM 22905 / CIP 110041 / 391-98 / NVH 391-98) protein is Orotidine 5'-phosphate decarboxylase.